The primary structure comprises 121 residues: Probable K(+)/H(+) antiporter subunit G (121 aa).

3 helical membrane-spanning segments follow: residues 10–32 (WAAL…GSLG), 45–67 (APTI…CFAV), and 72–94 (WVFH…LMLL).

Belongs to the CPA3 antiporters (TC 2.A.63) subunit G family. As to quaternary structure, may form a hetero-oligomeric complex that consists of six subunits: PhaAB, PhaC, PhaD, PhaE, PhaF and PhaG.

The protein localises to the cell membrane. In terms of biological role, part of a K(+) efflux system which is required for the adaptation of R.meliloti to alkaline pH as well as for the infection process during symbiotic nodule development. The protein is Probable K(+)/H(+) antiporter subunit G (phaG) of Rhizobium meliloti (strain 1021) (Ensifer meliloti).